We begin with the raw amino-acid sequence, 131 residues long: Insulin-like 3 (131 aa).

An N-terminal signal peptide occupies residues 1–24 (MDPRLPAWALVLLGPALVFALGPA). Intrachain disulfides connect Cys34–Cys117, Cys46–Cys130, and Cys116–Cys121. A propeptide spans 58 to 104 (PVAAGDGELLQWLERRHLLYGLVANSEPAPGGPGLQPMPQTSHHHRH) (c peptide like). The disordered stretch occupies residues 86–105 (APGGPGLQPMPQTSHHHRHR).

This sequence belongs to the insulin family. As to quaternary structure, heterodimer of a B chain and an A chain linked by two disulfide bonds. As to expression, highest expression in the Leydig cells of the testis.

The protein localises to the secreted. In terms of biological role, seems to play a role in testicular function. May be a trophic hormone with a role in testicular descent in fetal life. Is a ligand for LGR8 receptor. This chain is Insulin-like 3 (INSL3), found in Callithrix jacchus (White-tufted-ear marmoset).